We begin with the raw amino-acid sequence, 578 residues long: Arginine--tRNA ligase (578 aa).

A 'HIGH' region motif is present at residues 127 to 137; sequence PNLAKEMHVGH.

It belongs to the class-I aminoacyl-tRNA synthetase family. In terms of assembly, monomer.

The protein resides in the cytoplasm. It catalyses the reaction tRNA(Arg) + L-arginine + ATP = L-arginyl-tRNA(Arg) + AMP + diphosphate. In Pseudomonas putida (strain GB-1), this protein is Arginine--tRNA ligase.